Here is a 533-residue protein sequence, read N- to C-terminus: Peptide chain release factor 3 (533 aa).

The tr-type G domain occupies 10 to 278; the sequence is EKRRTFAIIS…TFVEIAPPPQ (269 aa). Residues 19 to 26, 87 to 91, and 141 to 144 each bind GTP; these read SHPDAGKT, DTPGH, and NKMD.

It belongs to the TRAFAC class translation factor GTPase superfamily. Classic translation factor GTPase family. PrfC subfamily.

It is found in the cytoplasm. In terms of biological role, increases the formation of ribosomal termination complexes and stimulates activities of RF-1 and RF-2. It binds guanine nucleotides and has strong preference for UGA stop codons. It may interact directly with the ribosome. The stimulation of RF-1 and RF-2 is significantly reduced by GTP and GDP, but not by GMP. This Salinibacter ruber (strain DSM 13855 / M31) protein is Peptide chain release factor 3.